The following is a 295-amino-acid chain: 4-hydroxy-tetrahydrodipicolinate synthase (295 aa).

Residue Thr46 coordinates pyruvate. Residue Tyr135 is the Proton donor/acceptor of the active site. The active-site Schiff-base intermediate with substrate is the Lys164. Position 205 (Ile205) interacts with pyruvate.

It belongs to the DapA family. As to quaternary structure, homotetramer; dimer of dimers.

The protein resides in the cytoplasm. It carries out the reaction L-aspartate 4-semialdehyde + pyruvate = (2S,4S)-4-hydroxy-2,3,4,5-tetrahydrodipicolinate + H2O + H(+). The protein operates within amino-acid biosynthesis; L-lysine biosynthesis via DAP pathway; (S)-tetrahydrodipicolinate from L-aspartate: step 3/4. In terms of biological role, catalyzes the condensation of (S)-aspartate-beta-semialdehyde [(S)-ASA] and pyruvate to 4-hydroxy-tetrahydrodipicolinate (HTPA). The chain is 4-hydroxy-tetrahydrodipicolinate synthase from Wolinella succinogenes (strain ATCC 29543 / DSM 1740 / CCUG 13145 / JCM 31913 / LMG 7466 / NCTC 11488 / FDC 602W) (Vibrio succinogenes).